We begin with the raw amino-acid sequence, 401 residues long: NADH-dependent flavin oxidoreductase iliE (401 aa).

FMN-binding positions include 25 to 28 (ASMS) and Q107. Substrate is bound at residue 188–191 (HAAH). FMN is bound at residue 346–347 (AR).

Belongs to the NADH:flavin oxidoreductase/NADH oxidase family.

NADH-dependent flavin oxidoreductase; part of the gene cluster that mediates the biosynthesis of ilicicolin H, a 4-hydroxy-2-pyridonealkaloid that has potent and broad antifungal activities by inhibiting the mitochondrial respiration chain. The biosynthesis of ilicicolin H starts with formation of the tetramic acid by the hybrid PKS-NRPS synthetase iliA with the partnering trans-enoyl reductase iliB since iliA lacks a designated enoylreductase (ER) domain. The cytochrome P450 monooxygenase iliC then catalyzes the ring expansion of the tetramate to the acyclic 2-pyridone. The pericyclase iliD further converts the acyclic 2-pyridone into 8-epi-ilicicolin H. 8-epi-ilicicolin H might then spontaneously convert to ilicicolin H since ilicicolin H is produced in the absence of the epimerase iliE, in contrast to what was observed for the Talaromyces variabilis ilicolin H biosynthetic pathway. In Hypocrea jecorina (strain QM6a) (Trichoderma reesei), this protein is NADH-dependent flavin oxidoreductase iliE.